The primary structure comprises 386 residues: Patatin-06 (386 aa).

A signal peptide spans 1-23; the sequence is MATTKSFLILFFMILATTSSTCA. One can recognise a PNPLA domain in the interval 32 to 229; that stretch reads LSIDGGGIKG…TVGDPALLSL (198 aa). Residues 36 to 41 carry the GXGXXG motif; that stretch reads GGGIKG. Positions 75-79 match the GXSXG motif; it reads GTSTG. The Nucleophile role is filled by Ser-77. The N-linked (GlcNAc...) asparagine glycan is linked to Asn-115. The active-site Proton acceptor is Asp-215. Residues 215–217 carry the DGA/G motif; it reads DGG. Positions 321–384 form a coiled coil; that stretch reads ENALTGTTTE…NRKKLRANKA (64 aa).

This sequence belongs to the patatin family. In terms of tissue distribution, tuber.

The protein localises to the vacuole. In terms of biological role, probable lipolytic acyl hydrolase (LAH), an activity which is thought to be involved in the response of tubers to pathogens. This chain is Patatin-06, found in Solanum tuberosum (Potato).